Consider the following 278-residue polypeptide: Large ribosomal subunit protein uL2 (278 aa).

Disordered stretches follow at residues 1–58 (MAIR…GGGH) and 225–278 (VMNP…KNKR). Over residues 37 to 58 (LHGRGGRNAHGRITTRHKGGGH) the composition is skewed to basic residues. Residues 253–267 (PEGRTRKNKASDKMI) show a composition bias toward basic and acidic residues. Basic residues predominate over residues 268–278 (VRRRRTGKNKR).

The protein belongs to the universal ribosomal protein uL2 family. Part of the 50S ribosomal subunit. Forms a bridge to the 30S subunit in the 70S ribosome.

In terms of biological role, one of the primary rRNA binding proteins. Required for association of the 30S and 50S subunits to form the 70S ribosome, for tRNA binding and peptide bond formation. It has been suggested to have peptidyltransferase activity; this is somewhat controversial. Makes several contacts with the 16S rRNA in the 70S ribosome. The polypeptide is Large ribosomal subunit protein uL2 (Rhodococcus erythropolis (strain PR4 / NBRC 100887)).